The sequence spans 150 residues: Molybdopterin synthase catalytic subunit (150 aa).

Substrate-binding positions include 37–39, 103–104, Lys-119, and 126–128; these read KVR, HR, and KRE. Lys-119 participates in a covalent cross-link: Glycyl lysine isopeptide (Lys-Gly) (interchain with G-Cter in MoaD).

Belongs to the MoaE family. As to quaternary structure, heterotetramer of 2 MoaD subunits and 2 MoaE subunits. Also stable as homodimer. The enzyme changes between these two forms during catalysis.

The catalysed reaction is 2 [molybdopterin-synthase sulfur-carrier protein]-C-terminal-Gly-aminoethanethioate + cyclic pyranopterin phosphate + H2O = molybdopterin + 2 [molybdopterin-synthase sulfur-carrier protein]-C-terminal Gly-Gly + 2 H(+). It participates in cofactor biosynthesis; molybdopterin biosynthesis. In terms of biological role, converts molybdopterin precursor Z to molybdopterin. This requires the incorporation of two sulfur atoms into precursor Z to generate a dithiolene group. The sulfur is provided by MoaD. This Escherichia coli (strain K12) protein is Molybdopterin synthase catalytic subunit (moaE).